Consider the following 457-residue polypeptide: Dihydrolipoyl dehydrogenase (457 aa).

Residues 32–40, K49, and A113 each bind FAD; that span reads EKEYFGGVC. C40 and C45 form a disulfide bridge. NAD(+) contacts are provided by residues 178 to 182, V235, and 262 to 265; these read GGGVI and SIGR. Residues D303 and A311 each contribute to the FAD site. The active-site Proton acceptor is H437.

It belongs to the class-I pyridine nucleotide-disulfide oxidoreductase family. As to quaternary structure, homodimer. The cofactor is FAD.

It is found in the cytoplasm. It carries out the reaction N(6)-[(R)-dihydrolipoyl]-L-lysyl-[protein] + NAD(+) = N(6)-[(R)-lipoyl]-L-lysyl-[protein] + NADH + H(+). Its function is as follows. Lipoamide dehydrogenase is a component of the alpha-ketoacid dehydrogenase complexes. This Mycoplasma pneumoniae (strain ATCC 29342 / M129 / Subtype 1) (Mycoplasmoides pneumoniae) protein is Dihydrolipoyl dehydrogenase (pdhD).